We begin with the raw amino-acid sequence, 416 residues long: Phosphatidylinositol 5-phosphate 4-kinase type-2 gamma (416 aa).

The 378-residue stretch at 38 to 415 (ASDPMLSVFM…RFREFISNIF (378 aa)) folds into the PIPK domain.

Phosphorylated, phosphorylation is induced by EGF.

It is found in the endoplasmic reticulum. The protein localises to the cytoplasm. The enzyme catalyses a 1,2-diacyl-sn-glycero-3-phospho-(1D-myo-inositol-5-phosphate) + ATP = a 1,2-diacyl-sn-glycero-3-phospho-(1D-myo-inositol-4,5-bisphosphate) + ADP + H(+). It catalyses the reaction 1,2-dihexadecanoyl-sn-glycero-3-phospho-(1D-myo-inositol-5-phosphate) + ATP = 1,2-dihexadecanoyl-sn-glycero-3-phospho-(1D-myo-inositol-4,5-bisphosphate) + ADP + H(+). It carries out the reaction 1,2-dihexadecanoyl-sn-glycero-3-phospho-(1D-myo-inositol-5-phosphate) + GTP = 1,2-dihexadecanoyl-sn-glycero-3-phospho-(1D-myo-inositol-4,5-bisphosphate) + GDP + H(+). In terms of biological role, phosphatidylinositol 5-phosphate 4-kinase with low enzymatic activity. May be a GTP sensor, has higher GTP-dependent kinase activity than ATP-dependent kinase activity. In Danio rerio (Zebrafish), this protein is Phosphatidylinositol 5-phosphate 4-kinase type-2 gamma (pip4k2c).